A 457-amino-acid chain; its full sequence is MIGSLTARIFAIFWLTLALVLMLVLMLPKLDSRQMTELLDSEQRQGLMIEQHVEAELANDPPNDLMWWRRLFRAIDKWAPPGQRLLLVTTEGRVIGAERSEMQIIRNFIGQADNADHPQKKKYGRVELVGPFSVRDGEDNYQLYLIRPASSSQSDFINLLFDRPLLLLIVTMLVSTPLLLWLAWSLAKPARKLKNAADEVAQGNLRQHPELEAGPQEFLAAGASFNQMVTALERMMTSQQRLLSDISHELRTPLTRLQLGTALLRRRSGESKELERIETEAQRLDSMINDLLVMSRNQQKNALVSETIKANQLWSEVLDNAAFEAEQMGKSLTVNFPPGPWPLYGNPNALESALENIVRNALRYSHTKIEVGFAVDKDGITITVDDDGPGVSPEDREQIFRPFYRTDEARDRESGGTGLGLAIVETAIQQHRGWVKAEDSPLGGLRLVIWLPLYKRS.

At 1 to 7 (MIGSLTA) the chain is on the cytoplasmic side. A helical transmembrane segment spans residues 8 to 29 (RIFAIFWLTLALVLMLVLMLPK). Residues 30-163 (LDSRQMTELL…SDFINLLFDR (134 aa)) lie on the Periplasmic side of the membrane. The chain crosses the membrane as a helical span at residues 164–184 (PLLLLIVTMLVSTPLLLWLAW). Residues 185–237 (SLAKPARKLKNAADEVAQGNLRQHPELEAGPQEFLAAGASFNQMVTALERMMT) form the HAMP domain. Topologically, residues 185–457 (SLAKPARKLK…VIWLPLYKRS (273 aa)) are cytoplasmic. Positions 245–455 (DISHELRTPL…RLVIWLPLYK (211 aa)) constitute a Histidine kinase domain. At His-248 the chain carries Phosphohistidine; by autocatalysis.

It is found in the cell inner membrane. It catalyses the reaction ATP + protein L-histidine = ADP + protein N-phospho-L-histidine.. Functionally, this protein is involved in several diverse cellular processes, such as the functioning of acetohydroxyacid synthetase I, in the biosynthesis of isoleucine and valine, the TraJ protein activation activity for tra gene expression in F plasmid, and the synthesis, translocation, or stability of cell envelope proteins. Activates CpxR by phosphorylation. This chain is Sensor protein CpxA (cpxA), found in Escherichia coli O157:H7.